Here is a 310-residue protein sequence, read N- to C-terminus: N-acetyl-gamma-glutamyl-phosphate reductase (310 aa).

Cysteine 117 is a catalytic residue.

Belongs to the NAGSA dehydrogenase family. Type 2 subfamily.

It is found in the cytoplasm. It carries out the reaction N-acetyl-L-glutamate 5-semialdehyde + phosphate + NADP(+) = N-acetyl-L-glutamyl 5-phosphate + NADPH + H(+). It functions in the pathway amino-acid biosynthesis; L-arginine biosynthesis; N(2)-acetyl-L-ornithine from L-glutamate: step 3/4. Catalyzes the NADPH-dependent reduction of N-acetyl-5-glutamyl phosphate to yield N-acetyl-L-glutamate 5-semialdehyde. The sequence is that of N-acetyl-gamma-glutamyl-phosphate reductase from Brucella ovis (strain ATCC 25840 / 63/290 / NCTC 10512).